We begin with the raw amino-acid sequence, 432 residues long: Trigger factor (432 aa).

Residues 161–246 enclose the PPIase FKBP-type domain; it reads EDRVTIDFTG…LKKVEERELP (86 aa).

The protein belongs to the FKBP-type PPIase family. Tig subfamily. As to quaternary structure, homodimer and monomer. In vivo most of the ribosomes are in complex with monomeric TF. Uncomplexed TF, however, is in a monomer-dimer equilibrium with approximately two thirds of TF existing in a dimeric state.

The protein localises to the cytoplasm. It catalyses the reaction [protein]-peptidylproline (omega=180) = [protein]-peptidylproline (omega=0). Its function is as follows. Involved in protein export. Acts as a chaperone by maintaining the newly synthesized protein in an open conformation. Functions as a peptidyl-prolyl cis-trans isomerase. This is Trigger factor from Shigella dysenteriae serotype 1 (strain Sd197).